Here is a 193-residue protein sequence, read N- to C-terminus: Epididymal-specific lipocalin-12 (193 aa).

The first 19 residues, 1–19, serve as a signal peptide directing secretion; the sequence is MGPWWALWLILTLPQILES. A disulfide bridge links C88 with C193. N-linked (GlcNAc...) asparagine glycans are attached at residues N143 and N172.

It belongs to the calycin superfamily. Lipocalin family. Monomer. As to expression, expressed in epididymis.

It is found in the secreted. Binds all-trans retinoic acid and may act as a retinoid carrier protein within the epididymis. May play a role in male fertility. In Mus musculus (Mouse), this protein is Epididymal-specific lipocalin-12 (Lcn12).